The primary structure comprises 550 residues: Arginine--tRNA ligase (550 aa).

Residues 130-140 carry the 'HIGH' region motif; the sequence is ANPTGPIHIGG.

Belongs to the class-I aminoacyl-tRNA synthetase family. As to quaternary structure, monomer.

It localises to the cytoplasm. The enzyme catalyses tRNA(Arg) + L-arginine + ATP = L-arginyl-tRNA(Arg) + AMP + diphosphate. The polypeptide is Arginine--tRNA ligase (Mycolicibacterium gilvum (strain PYR-GCK) (Mycobacterium gilvum (strain PYR-GCK))).